The primary structure comprises 192 residues: MEVLFEAKVGDITLKLAQGDITQYPAKAIVNAANKRLEHGGGVAYAIAKACAGDAGLYTEISKKAMREQFGRDYIDHGEVVVTPAMNLEERGIKYVFHTVGPICSGMWSEELKEKLYKAFLGPLEKAEEMGVESIAFPAVSAGIYGCDLEKVVETFLEAVKNFKGSAVKEVALVIYDRKSAEVALKVFERSL.

The Macro domain maps to 1-192 (MEVLFEAKVG…VALKVFERSL (192 aa)). Substrate-binding positions include 19-21 (GDI), 32-34 (AAN), 39-44 (HGGGVA), and 140-146 (VSAGIYG).

It carries out the reaction 5-O-(ADP-D-ribosyl)-L-glutamyl-[protein] + H2O = L-glutamyl-[protein] + ADP-D-ribose + H(+). It catalyses the reaction 4-O-(ADP-D-ribosyl)-L-aspartyl-[protein] + H2O = L-aspartyl-[protein] + ADP-D-ribose + H(+). The enzyme catalyses alpha-NAD(+) + H2O = ADP-D-ribose + nicotinamide + H(+). Removes ADP-ribose from aspartate and glutamate residues in proteins bearing a single ADP-ribose moiety. Inactive towards proteins bearing poly-ADP-ribose. Catalyzes removal of a phosphate group from ADP-ribose 1''-phosphate (Appr1p), but with low efficiency. The sequence is that of ADP-ribose glycohydrolase AF_1521 from Archaeoglobus fulgidus (strain ATCC 49558 / DSM 4304 / JCM 9628 / NBRC 100126 / VC-16).